The following is a 633-amino-acid chain: Extracellular metalloproteinase 3 (633 aa).

The N-terminal stretch at 1–18 is a signal peptide; it reads MHGLLLAGLLALPMNVLA. Positions 19–246 are excised as a propeptide; sequence HPAEHHASNV…VHNVVDYVAS (228 aa). Residues N232 and N410 are each glycosylated (N-linked (GlcNAc...) asparagine). H429 contacts Zn(2+). The active site involves E430. H433 lines the Zn(2+) pocket. N480 and N622 each carry an N-linked (GlcNAc...) asparagine glycan.

This sequence belongs to the peptidase M36 family. The cofactor is Zn(2+).

The protein resides in the secreted. Secreted metalloproteinase that allows assimilation of proteinaceous substrates and probably acts as a virulence factor. This is Extracellular metalloproteinase 3 (MEP3) from Arthroderma gypseum (strain ATCC MYA-4604 / CBS 118893) (Microsporum gypseum).